A 152-amino-acid polypeptide reads, in one-letter code: Putative pre-16S rRNA nuclease (152 aa).

It belongs to the YqgF nuclease family.

Its subcellular location is the cytoplasm. In terms of biological role, could be a nuclease involved in processing of the 5'-end of pre-16S rRNA. The chain is Putative pre-16S rRNA nuclease from Bifidobacterium longum (strain DJO10A).